A 507-amino-acid polypeptide reads, in one-letter code: Sperm-associated antigen 6 (507 aa).

8 ARM repeats span residues 31-70 (PQNI…RLAN), 73-112 (DDLA…AVGK), 115-154 (PQLA…YIAR), 157-196 (TELS…DISK), 199-238 (PELA…QIAK), 241-280 (VDLA…EIAK), 325-365 (ENLA…QLGR), and 402-441 (KAIK…KVLP).

Interacts with SPAG16 and SPAG17. As to expression, highly expressed in testis. Not detected in prostate, ovary, spleen, thymus, small intestine, colon and peripheral blood leukocytes.

The protein localises to the cytoplasm. It is found in the cytoskeleton. Its subcellular location is the cell projection. It localises to the cilium. The protein resides in the flagellum. The protein localises to the cilium axoneme. Functionally, important for structural integrity of the central apparatus in the sperm tail and for flagellar motility. The chain is Sperm-associated antigen 6 (Spag6) from Mus musculus (Mouse).